The following is a 370-amino-acid chain: UPF0284 protein PCC7424_2681 (370 aa).

This sequence belongs to the UPF0284 family.

The protein is UPF0284 protein PCC7424_2681 of Gloeothece citriformis (strain PCC 7424) (Cyanothece sp. (strain PCC 7424)).